Consider the following 814-residue polypeptide: S-layer protein sap (814 aa).

An N-terminal signal peptide occupies residues 1–29; the sequence is MAKTNSYKKVIAGTMTAAMVAGVVSPVAA. 3 SLH domains span residues 30–93, 94–150, and 152–214; these read AGKT…DAKP, SFAD…KVNG, and PATK…AAKV. Positions 403–479 constitute a BIG2 domain; it reads FTSKDFKQNN…TVKDSKGKEL (77 aa).

Probably glycosylated.

It is found in the secreted. The protein localises to the cell wall. It localises to the S-layer. The S-layer is a paracrystalline mono-layered assembly of proteins which coat the surface of bacteria. This chain is S-layer protein sap (sap), found in Bacillus anthracis.